Consider the following 298-residue polypeptide: Small ribosomal subunit protein uS2 (298 aa).

The interval 240-298 (AGENWDTQAPGAGVPGSAFAAASAAAATSWEADGGDWAASSAPPAGESWAETQPTEAKW) is disordered. A compositionally biased stretch (low complexity) spans 248-271 (APGAGVPGSAFAAASAAAATSWEA). Residues 289 to 298 (AETQPTEAKW) show a composition bias toward polar residues.

This sequence belongs to the universal ribosomal protein uS2 family. Component of the small ribosomal subunit. Mature ribosomes consist of a small (40S) and a large (60S) subunit. The 40S subunit contains about 33 different proteins and 1 molecule of RNA (18S). The 60S subunit contains about 49 different proteins and 3 molecules of RNA (25S, 5.8S and 5S). Interacts with rps21.

Its subcellular location is the cytoplasm. Functionally, required for the assembly and/or stability of the 40S ribosomal subunit. Required for the processing of the 20S rRNA-precursor to mature 18S rRNA in a late step of the maturation of 40S ribosomal subunits. The chain is Small ribosomal subunit protein uS2 (rps0) from Aspergillus clavatus (strain ATCC 1007 / CBS 513.65 / DSM 816 / NCTC 3887 / NRRL 1 / QM 1276 / 107).